Reading from the N-terminus, the 160-residue chain is Ribosomal RNA large subunit methyltransferase H (160 aa).

S-adenosyl-L-methionine-binding positions include L76, G108, and 127–132; that span reads LGKMTW.

The protein belongs to the RNA methyltransferase RlmH family. Homodimer.

The protein resides in the cytoplasm. It carries out the reaction pseudouridine(1915) in 23S rRNA + S-adenosyl-L-methionine = N(3)-methylpseudouridine(1915) in 23S rRNA + S-adenosyl-L-homocysteine + H(+). Functionally, specifically methylates the pseudouridine at position 1915 (m3Psi1915) in 23S rRNA. The chain is Ribosomal RNA large subunit methyltransferase H from Sinorhizobium fredii (strain NBRC 101917 / NGR234).